Consider the following 428-residue polypeptide: F-box/LRR-repeat protein 3 (428 aa).

A compositionally biased stretch (basic and acidic residues) spans 1–21 (MKRGGRDSDRNSSEEGTAEKS). A disordered region spans residues 1–27 (MKRGGRDSDRNSSEEGTAEKSKKLRTT). An F-box domain is found at 34 to 81 (CDWGNLLQDIILQVFKYLPLLDRAHASQVCRNWNQVFHMPDLWRCFEF). 7 LRR repeats span residues 119-146 (SSKE…GLIS), 181-207 (DTPV…KMSS), 208-233 (CPHV…ALNY), 234-259 (HLLS…RIDV), 316-341 (GRSV…VVCA), 343-368 (GLRP…GLGE), and 369-394 (CEVS…SIME).

In terms of assembly, part of the SCF (SKP1-CUL1-F-box) E3 ubiquitin-protein ligase complex SCF(FBXL3) composed of CUL1, SKP1, RBX1 and FBXL3. Interacts with CRY1 and CRY2 (phosphorylated). Interacts with HDAC3. Interacts with KDM8. Undergoes autophagy-mediated degradation in the liver in a time-dependent manner. Widely expressed.

Its subcellular location is the nucleus. The protein resides in the cytoplasm. The protein operates within protein modification; protein ubiquitination. In terms of biological role, substrate-recognition component of the SCF(FBXL3) E3 ubiquitin ligase complex involved in circadian rhythm function. Plays a key role in the maintenance of both the speed and the robustness of the circadian clock oscillation. The SCF(FBXL3) complex mainly acts in the nucleus and mediates ubiquitination and subsequent degradation of CRY1 and CRY2. Activity of the SCF(FBXL3) complex is counteracted by the SCF(FBXL21) complex. This chain is F-box/LRR-repeat protein 3 (FBXL3), found in Homo sapiens (Human).